The sequence spans 466 residues: Endoglucanase E-5 (466 aa).

An N-terminal signal peptide occupies residues 1–36 (MAKSPAARKGXPPVAVAVTAALALLIALLSPGVAQA). Residues 37–139 (AGLTATVTKE…TINGAPCDEG (103 aa)) enclose the CBM2 domain. Residues 129 to 166 (CTINGAPCDEGSEPGGPGGPGTPSPDPGTQPGTGTPVE) are disordered. The active-site Proton donor is Glu299. Glu391 acts as the Nucleophile in catalysis.

The protein belongs to the glycosyl hydrolase 5 (cellulase A) family.

The enzyme catalyses Endohydrolysis of (1-&gt;4)-beta-D-glucosidic linkages in cellulose, lichenin and cereal beta-D-glucans.. Its pathway is glycan metabolism; cellulose degradation. The protein is Endoglucanase E-5 (celE) of Thermobifida fusca (Thermomonospora fusca).